The chain runs to 265 residues: 2-C-methyl-D-erythritol 4-phosphate cytidylyltransferase (265 aa).

Residues 231–241 show a composition bias toward basic and acidic residues; it reads DRGGASREAER. The disordered stretch occupies residues 231-265; sequence DRGGASREAERSAMPSAATSVFSGARSAASGSEEV. A compositionally biased stretch (low complexity) spans 253–265; sequence SGARSAASGSEEV.

The protein belongs to the IspD/TarI cytidylyltransferase family. IspD subfamily.

It catalyses the reaction 2-C-methyl-D-erythritol 4-phosphate + CTP + H(+) = 4-CDP-2-C-methyl-D-erythritol + diphosphate. Its pathway is isoprenoid biosynthesis; isopentenyl diphosphate biosynthesis via DXP pathway; isopentenyl diphosphate from 1-deoxy-D-xylulose 5-phosphate: step 2/6. Its function is as follows. Catalyzes the formation of 4-diphosphocytidyl-2-C-methyl-D-erythritol from CTP and 2-C-methyl-D-erythritol 4-phosphate (MEP). The polypeptide is 2-C-methyl-D-erythritol 4-phosphate cytidylyltransferase (Xanthomonas campestris pv. campestris (strain 8004)).